Reading from the N-terminus, the 179-residue chain is Large ribosomal subunit protein uL5 (179 aa).

This sequence belongs to the universal ribosomal protein uL5 family. As to quaternary structure, part of the 50S ribosomal subunit; part of the 5S rRNA/L5/L18/L25 subcomplex. Contacts the 5S rRNA and the P site tRNA. Forms a bridge to the 30S subunit in the 70S ribosome.

Its function is as follows. This is one of the proteins that bind and probably mediate the attachment of the 5S RNA into the large ribosomal subunit, where it forms part of the central protuberance. In the 70S ribosome it contacts protein S13 of the 30S subunit (bridge B1b), connecting the 2 subunits; this bridge is implicated in subunit movement. Contacts the P site tRNA; the 5S rRNA and some of its associated proteins might help stabilize positioning of ribosome-bound tRNAs. The sequence is that of Large ribosomal subunit protein uL5 from Burkholderia mallei (strain NCTC 10247).